We begin with the raw amino-acid sequence, 492 residues long: Acyl-CoA-binding domain-containing protein 5 (492 aa).

The region spanning 8–97 (HATRFEAAVK…MKKILESMPM (90 aa)) is the ACB domain. An acyl-CoA-binding positions include 19–28 (IQSLPKNGSF), 39–43 (YSFYK), Lys65, and Tyr84. 2 disordered regions span residues 141–162 (AVNGKAESSDSGAESEEEGLRE) and 335–399 (VKCG…DRGP). Residues 153–162 (AESEEEGLRE) are compositionally biased toward acidic residues. The segment covering 335-360 (VKCGGEDGKASNGAPHKEKKDGEKAD) has biased composition (basic and acidic residues). Gly residues predominate over residues 378–388 (GSQGGQMGNGG). The segment covering 389-399 (DGERWGSDRGP) has biased composition (basic and acidic residues). A coiled-coil region spans residues 405–431 (EQIAVVLMRLQEDMQNVLQRLHMLEAV). The chain crosses the membrane as a helical span at residues 464–484 (GVLAFAIVWPFIAQWLVHVYL).

The protein belongs to the ATG37 family.

It is found in the peroxisome membrane. In terms of biological role, acyl-CoA binding protein which acts as the peroxisome receptor for pexophagy but is dispensable for aggrephagy and nonselective autophagy. Binds medium- and long-chain acyl-CoA esters. The chain is Acyl-CoA-binding domain-containing protein 5 (ACBD5) from Gallus gallus (Chicken).